A 623-amino-acid polypeptide reads, in one-letter code: MNQSFWRPLFAILLFMLVFHLTNIFFAQQGAQVAQISYSRLRAELAQDNIKKITLKGTAVTGEFRGKTRVSALVQGKEQQREFTGFSSVLPTIDDQTLVPELMARKVEVSALSTETPLLLNALIYVAPWVILIAIWWVGMRSMRSQGPSGMMGGFSRSGAKAYLAGDKMAVSFKDVAGMEDSKQELKEVVDYLRNPKQFARIGGKVPKGVLLVGPPGTGKTLLARAVAGEAGVAFFSISASQFIEMFVGVGASRVRDLFTNAKKAAPSIVFIDELDAVGRSRGAGFGGGHDEREQTLNQLLSEMDGFDQHEEVIVLAATNRPDVLDPALLRPGRFDRHVVIERPDWRDREKILQVHVRKITMNGRIDLGVIARGTPGMTGADLESLVNEAAILASRENAAAVTMEHLEKAKDKILMGSERRMIISLEEKRITAYHEAGHTLVARLLPGTDPIHKVTIIPHGMALGVTQQLPEDDRYHYPQSYLENRLVVAMGGRVAERLAFGEVSSGAQGDLKQVTSLAEKMVCQWGMSEKVGGMTFSRGEEHPFLGMKLAEEKTFSEAMAWRIDQEIAAFITRAEQRAGDLLSANRERLDLLAQALQDEETLDGSRVDEIIGSLNTAQAPPP.

Residues methionine 1–arginine 7 are Cytoplasmic-facing. The helical transmembrane segment at proline 8 to glutamine 28 threads the bilayer. Residues glutamine 29–proline 117 lie on the Periplasmic side of the membrane. The chain crosses the membrane as a helical span at residues leucine 118–valine 138. Residues glycine 139–proline 623 are Cytoplasmic-facing. ATP is bound at residue glycine 214–threonine 221. Residue histidine 435 coordinates Zn(2+). Residue glutamate 436 is part of the active site. 2 residues coordinate Zn(2+): histidine 439 and aspartate 511.

In the central section; belongs to the AAA ATPase family. It in the C-terminal section; belongs to the peptidase M41 family. In terms of assembly, homohexamer. Requires Zn(2+) as cofactor.

It localises to the cell inner membrane. Its function is as follows. Acts as a processive, ATP-dependent zinc metallopeptidase for both cytoplasmic and membrane proteins. Plays a role in the quality control of integral membrane proteins. In Pelobacter propionicus (strain DSM 2379 / NBRC 103807 / OttBd1), this protein is ATP-dependent zinc metalloprotease FtsH.